The sequence spans 374 residues: Glutamate 5-kinase (374 aa).

An ATP-binding site is contributed by Lys-16. Substrate-binding residues include Ser-56, Asp-143, and Asn-155. Residues 175–176 and 217–223 contribute to the ATP site; these read TD and SGGMLTK. Residues 282 to 360 form the PUA domain; the sequence is RGALILDDGA…SNIGAILGYK (79 aa).

The protein belongs to the glutamate 5-kinase family.

It localises to the cytoplasm. It catalyses the reaction L-glutamate + ATP = L-glutamyl 5-phosphate + ADP. The protein operates within amino-acid biosynthesis; L-proline biosynthesis; L-glutamate 5-semialdehyde from L-glutamate: step 1/2. Catalyzes the transfer of a phosphate group to glutamate to form L-glutamate 5-phosphate. This is Glutamate 5-kinase from Marinomonas sp. (strain MWYL1).